A 1871-amino-acid polypeptide reads, in one-letter code: Callose synthase 4 (1871 aa).

At 1–491 the chain is on the cytoplasmic side; sequence MNQPNRGQIL…FWHLFRSFDR (491 aa). Residues 492–512 form a helical membrane-spanning segment; sequence MWSFYILSLQAMIIIAWNETS. Residues 513 to 521 are Extracellular-facing; sequence ESGGAVFHK. A helical transmembrane segment spans residues 522–542; that stretch reads VLSVFITAAKLNLFQAFLDIA. The Cytoplasmic portion of the chain corresponds to 543–558; that stretch reads LSWKARHSMSTHVRQR. Residues 559-579 traverse the membrane as a helical segment; it reads YIFKAVAAAVWVLLMPLTYAY. Over 580-583 the chain is Extracellular; the sequence is SHTS. Residues 584 to 604 traverse the membrane as a helical segment; sequence IFIVAILIYLSPNMLPEMLLL. The Cytoplasmic segment spans residues 605 to 640; the sequence is IPSIRRTLEKSDFRPVKLIMWWSQPELYIGRGMHES. A helical transmembrane segment spans residues 641 to 661; sequence AWSIYKYMMFWIVLLTSKLAF. Residues 662 to 701 are Extracellular-facing; that stretch reads SYYVEQIKPLMGPTKEIMSVPMPGYWLPEFFPHVKNNRGV. Residues 702–724 form a helical membrane-spanning segment; it reads VITLWSPVILVYFMDTQIWYAIV. At 725–1441 the chain is on the cytoplasmic side; that stretch reads STLVGGLYGA…FDFFRMLSCY (717 aa). Residues 1442–1462 form a helical membrane-spanning segment; sequence FTTVGFYFCSMLTVLTVYVFL. At 1463 to 1485 the chain is on the extracellular side; the sequence is YGRLYLVLSGVEKELGNKPMMME. Residues 1486–1506 traverse the membrane as a helical segment; that stretch reads IILASQSFVQIVFLMAMPMIM. Over 1507 to 1516 the chain is Cytoplasmic; sequence EIGLERGFYD. Residues 1517 to 1537 form a helical membrane-spanning segment; that stretch reads ALFDFVLMQLQLASVFFTFQL. Residues 1538-1580 lie on the Extracellular side of the membrane; the sequence is GTKFHYYCKTLLHGGAEYRGTGRGFVVFHAKFAENYRFYSRSH. The next 2 membrane-spanning stretches (helical) occupy residues 1581–1601 and 1602–1622; these read FVKATELGILLLVYHIFGPTY and IGLFTISIWFMVGTWLFAPFL. The Extracellular segment spans residues 1623–1675; it reads FNPSGFEWHEIVEDWADWKKWIEYDNGGIGVPPEKSWESWWEKDIEHLQHSGK. Residues 1676–1696 traverse the membrane as a helical segment; the sequence is WGIVVEIFFALRFFIFQYGLV. Residues 1697-1708 are Cytoplasmic-facing; the sequence is YQLSAFKNKYSS. Residues 1709 to 1729 traverse the membrane as a helical segment; the sequence is LWVFGASWLLILILLLTVTVL. The Extracellular portion of the chain corresponds to 1730 to 1741; that stretch reads DYARRRLGTEFQ. Residues 1742 to 1762 form a helical membrane-spanning segment; that stretch reads LLFRIIKVSLFLAFMAIFITL. Over 1763-1772 the chain is Cytoplasmic; that stretch reads MTCRLILPQD. Residues 1773–1793 traverse the membrane as a helical segment; sequence VFLCMLALIPTGWGLLLIAQS. Residues 1794 to 1815 lie on the Extracellular side of the membrane; sequence CKPLIQQPGIWSWVMTLAWVYD. Residues 1816–1836 traverse the membrane as a helical segment; it reads LVMGSLLFIPIAFMAWFPFIS. Residues 1837–1871 are Cytoplasmic-facing; sequence EFQTRMLFNQAFSRGLHISRILSGQRKHRSSKNKD.

This sequence belongs to the glycosyltransferase 48 family.

It localises to the cell membrane. It catalyses the reaction [(1-&gt;3)-beta-D-glucosyl](n) + UDP-alpha-D-glucose = [(1-&gt;3)-beta-D-glucosyl](n+1) + UDP + H(+). Involved in callose synthesis at the forming cell plate during cytokinesis. During plant growth and development, callose is found as a transitory component of the cell plate in dividing cells, is a major component of pollen mother cell walls and pollen tubes, and is found as a structural component of plasmodesmatal canals. This chain is Callose synthase 4 (CALS4), found in Arabidopsis thaliana (Mouse-ear cress).